Reading from the N-terminus, the 151-residue chain is Small ribosomal subunit protein uS15 (151 aa).

The disordered stretch occupies residues 1–20 (MARLHSGKRGSSGSTRPLRT).

This sequence belongs to the universal ribosomal protein uS15 family. Part of the 30S ribosomal subunit.

The protein is Small ribosomal subunit protein uS15 of Methanococcus aeolicus (strain ATCC BAA-1280 / DSM 17508 / OCM 812 / Nankai-3).